We begin with the raw amino-acid sequence, 75 residues long: UPF0352 protein YejL (75 aa).

It belongs to the UPF0352 family.

This is UPF0352 protein YejL from Escherichia coli O139:H28 (strain E24377A / ETEC).